The following is an 862-amino-acid chain: Eukaryotic translation initiation factor 3 subunit C (862 aa).

The tract at residues 1–81 (MSSRFFYGGG…EEEEKVTVVK (81 aa)) is disordered. Acidic residues predominate over residues 17-54 (SSDEEELYSDREEEEKSEEEESSEEEDETSEEEESDEE). Over residues 55-65 (TGARKFLKDVA) the composition is skewed to basic and acidic residues. A compositionally biased stretch (acidic residues) spans 66 to 75 (SDSEEEEEEE). A PCI domain is found at 600-774 (FHMHINLELL…NAIVFRKGVE (175 aa)). The interval 813–862 (RDQGAGARGGRGSGRGGQARGGPRFPGGQQGRRPGGQQFGGGALGGAIKA) is disordered. The segment covering 818–862 (GARGGRGSGRGGQARGGPRFPGGQQGRRPGGQQFGGGALGGAIKA) has biased composition (gly residues).

This sequence belongs to the eIF-3 subunit C family. As to quaternary structure, component of the eukaryotic translation initiation factor 3 (eIF-3) complex.

Its subcellular location is the cytoplasm. In terms of biological role, component of the eukaryotic translation initiation factor 3 (eIF-3) complex, which is involved in protein synthesis of a specialized repertoire of mRNAs and, together with other initiation factors, stimulates binding of mRNA and methionyl-tRNAi to the 40S ribosome. The eIF-3 complex specifically targets and initiates translation of a subset of mRNAs involved in cell proliferation. This is Eukaryotic translation initiation factor 3 subunit C (nip1) from Aspergillus fumigatus (strain CBS 144.89 / FGSC A1163 / CEA10) (Neosartorya fumigata).